We begin with the raw amino-acid sequence, 370 residues long: Phosphoserine aminotransferase (370 aa).

Position 1 is an N-acetylmethionine (methionine 1). O-phospho-L-serine contacts are provided by histidine 44 and arginine 45. Lysine 51 bears the N6-acetyllysine mark. Glycine 79, cysteine 80, and tryptophan 107 together coordinate pyridoxal 5'-phosphate. N6-acetyllysine is present on lysine 127. Pyridoxal 5'-phosphate contacts are provided by threonine 156, aspartate 176, and glutamine 199. Lysine 200 is modified (N6-(pyridoxal phosphate)lysine). Residues asparagine 241 and threonine 242 each contribute to the pyridoxal 5'-phosphate site. N6-acetyllysine occurs at positions 269, 318, and 323. Phosphoserine is present on serine 331. Lysine 333 carries the N6-acetyllysine modification. O-phospho-L-serine is bound by residues histidine 335, arginine 336, and arginine 342.

Belongs to the class-V pyridoxal-phosphate-dependent aminotransferase family. SerC subfamily. As to quaternary structure, homodimer. The cofactor is pyridoxal 5'-phosphate.

The enzyme catalyses O-phospho-L-serine + 2-oxoglutarate = 3-phosphooxypyruvate + L-glutamate. The protein operates within amino-acid biosynthesis; L-serine biosynthesis; L-serine from 3-phospho-D-glycerate: step 2/3. Involved in L-serine biosynthesis via the phosphorylated pathway, a three-step pathway converting the glycolytic intermediate 3-phospho-D-glycerate into L-serine. Catalyzes the second step, that is the pyridoxal 5'-phosphate-dependent transamination of 3-phosphohydroxypyruvate and L-glutamate to O-phosphoserine (OPS) and alpha-ketoglutarate. This chain is Phosphoserine aminotransferase (PSAT1), found in Oryctolagus cuniculus (Rabbit).